A 787-amino-acid chain; its full sequence is Serine/threonine-protein kinase PLK4 (787 aa).

The 255-residue stretch at 14-268 folds into the Protein kinase domain; the sequence is YEVQHLLGKG…LEQVLRHPFM (255 aa). Residues 20–28 and lysine 43 each bind ATP; that span reads LGKGGFASV. Aspartate 139 functions as the Proton acceptor in the catalytic mechanism. Residues 311–336 are disordered; sequence SNESRSSQRLRSIEKSAQSSSNPQML. The Cryptic POLO box 1 (CPB1) domain maps to 386–505; it reads EQQMRVPPLN…ARFVGLVKSK (120 aa). A Cryptic POLO box 2 (CPB2) domain is found at 506–613; it reads TPKITYFSSL…GRRPLTDVSH (108 aa). The 81-residue stretch at 675-755 folds into the POLO box domain; it reads PIKRINIPDV…IPQVKLRLKC (81 aa).

Belongs to the protein kinase superfamily. Ser/Thr protein kinase family. CDC5/Polo subfamily. In terms of assembly, homodimer. Post-translationally, ubiquitinated by the SCF(Slimb) ubiquitin ligase complex; leading to its degradation by the proteasome during interphase and regulating centriole number and ensuring the block to centriole reduplication.

It is found in the cytoplasm. The protein localises to the cytoskeleton. It localises to the microtubule organizing center. The protein resides in the centrosome. Its subcellular location is the centriole. The catalysed reaction is L-seryl-[protein] + ATP = O-phospho-L-seryl-[protein] + ADP + H(+). It carries out the reaction L-threonyl-[protein] + ATP = O-phospho-L-threonyl-[protein] + ADP + H(+). Its function is as follows. Serine/threonine-protein kinase that plays a central role in centriole duplication. Able to trigger procentriole formation on the surface of the mother centriole cylinder, using mother centriole as a platform, leading to the recruitment of centriole biogenesis proteins such as sas-6. When overexpressed, it is able to induce centrosome amplification through the simultaneous generation of multiple procentrioles adjoining each parental centriole during S phase. Centrosome amplification following overexpression can initiate tumorigenesis, highlighting the importance of centrosome regulation in cancers. The sequence is that of Serine/threonine-protein kinase PLK4 (SAK) from Drosophila willistoni (Fruit fly).